The primary structure comprises 132 residues: Large ribosomal subunit protein bL12 (132 aa).

The span at E100 to G126 shows a compositional bias: basic and acidic residues. A disordered region spans residues E100–K132.

It belongs to the bacterial ribosomal protein bL12 family. In terms of assembly, homodimer. Part of the ribosomal stalk of the 50S ribosomal subunit. Forms a multimeric L10(L12)X complex, where L10 forms an elongated spine to which 2 to 4 L12 dimers bind in a sequential fashion. Binds GTP-bound translation factors.

In terms of biological role, forms part of the ribosomal stalk which helps the ribosome interact with GTP-bound translation factors. Is thus essential for accurate translation. This chain is Large ribosomal subunit protein bL12, found in Thermosynechococcus vestitus (strain NIES-2133 / IAM M-273 / BP-1).